The chain runs to 124 residues: Kinocilin (124 aa).

2 helical membrane passes run 13–33 (LQLACVALGLVAGSIIIGISV) and 40–60 (MGGVFIGAAVLGLLILAYPFL). Residues 80–124 (PHPGADHGEGRSSTNGNKEGARSSLSTVSRTLEKLKPGTRGAEEC) are disordered. The span at 90–109 (RSSTNGNKEGARSSLSTVSR) shows a compositional bias: polar residues. Residues 110 to 124 (TLEKLKPGTRGAEEC) show a composition bias toward basic and acidic residues.

It localises to the membrane. In terms of biological role, may play a role in stabilizing dense microtubular networks or in vesicular trafficking. This chain is Kinocilin (KNCN), found in Homo sapiens (Human).